We begin with the raw amino-acid sequence, 439 residues long: ATP-dependent DNA helicase dda (439 aa).

32-39 (GPAGTGKT) lines the ATP pocket.

In terms of assembly, monomer. Interacts with UvsX and gene 32 protein.

The catalysed reaction is Couples ATP hydrolysis with the unwinding of duplex DNA at the replication fork by translocating in the 5'-3' direction. This creates two antiparallel DNA single strands (ssDNA). The leading ssDNA polymer is the template for DNA polymerase III holoenzyme which synthesizes a continuous strand.. It carries out the reaction ATP + H2O = ADP + phosphate + H(+). Functionally, DNA helicase that stimulates viral DNA replication and recombination. Plays a role in T4 DNA replication initiation by selecting and activating DNA origins. Acts by dissociating and reassociating with the DNA molecule being unwound. Unwinds DNA as a monomer in a 5'-3' direction at a rate of 250 bp/s and can efficiently displace proteins from the DNA. The polypeptide is ATP-dependent DNA helicase dda (dda) (Enterobacteria phage T4 (Bacteriophage T4)).